We begin with the raw amino-acid sequence, 111 residues long: Phosphoribosyl-ATP pyrophosphatase (111 aa).

This sequence belongs to the PRA-PH family.

It is found in the cytoplasm. The enzyme catalyses 1-(5-phospho-beta-D-ribosyl)-ATP + H2O = 1-(5-phospho-beta-D-ribosyl)-5'-AMP + diphosphate + H(+). It participates in amino-acid biosynthesis; L-histidine biosynthesis; L-histidine from 5-phospho-alpha-D-ribose 1-diphosphate: step 2/9. The chain is Phosphoribosyl-ATP pyrophosphatase (hisE) from Azospirillum brasilense.